A 178-amino-acid chain; its full sequence is MSIEVSNESGIDVSETELVSVARFVIGKMDVNPGAELSMVLLDTAAMADLHMRWMDLPGPTDVMSFPMDELEPGGRPDAPEPGPAMLGDIVLCPEFAAEQAAAAGHSLGHELALLTIHGVLHLLGYDHGEPDEEKEMFALQDRLLEEWVAEQVQAYQQDRQDERDRRLLDKSRYFDEP.

The Zn(2+) site is built by histidine 118, histidine 122, and histidine 128. The tract at residues 156-178 is disordered; that stretch reads YQQDRQDERDRRLLDKSRYFDEP. Residues 159-178 are compositionally biased toward basic and acidic residues; sequence DRQDERDRRLLDKSRYFDEP.

It belongs to the endoribonuclease YbeY family. Zn(2+) serves as cofactor.

The protein localises to the cytoplasm. Single strand-specific metallo-endoribonuclease involved in late-stage 70S ribosome quality control and in maturation of the 3' terminus of the 16S rRNA. The polypeptide is Endoribonuclease YbeY (Mycobacterium marinum (strain ATCC BAA-535 / M)).